A 403-amino-acid polypeptide reads, in one-letter code: Cell cycle checkpoint control protein RAD9B (403 aa).

Residues 285 to 347 form a disordered region; that stretch reads PLSQARRSHP…ASAGQDDIFE (63 aa). Ser354 and Ser363 each carry phosphoserine.

This sequence belongs to the rad9 family. In terms of assembly, interacts with HUS1, HUS1B, RAD1, RAD9A and RAD17.

This chain is Cell cycle checkpoint control protein RAD9B (Rad9b), found in Mus musculus (Mouse).